Here is a 687-residue protein sequence, read N- to C-terminus: POZ (BTB) and AT hook-containing zinc finger 1 (687 aa).

A BTB domain is found at 41 to 130; the sequence is CDVLLRVGDE…AYTSRIVVRL (90 aa). A compositionally biased stretch (polar residues) spans 250–260; the sequence is PFPNVASSAPP. The interval 250 to 279 is disordered; sequence PFPNVASSAPPLTSKRGRGRPRKANLLDSM. Residues 292–314 form a C2H2-type 1 zinc finger; that stretch reads LPCGLCGKVFTDANRLRQHEAQH. The segment at 332–351 is disordered; that stretch reads GENGLPISEDPDGPRKRSRT. 5 C2H2-type zinc fingers span residues 355–377, 383–405, 413–436, 442–464, and 495–517; these read VACEICGKIFRDVYHLNRHKLSH, YSCPVCGLRFKRKDRMSYHVRSH, YICQSCGKGFSRPDHLNGHIKQVH, HKCQTCNASFATRDRLRSHLACH, and NFCSICNRGFSSASYLKVHVKTH. A disordered region spans residues 564 to 587; that stretch reads SYGDLSDASDLKTPEKQSANGSFS. The segment at 605–628 adopts a C2H2-type 7 zinc-finger fold; it reads YPCPECGSFFRSKSYLNKHIQKVH.

As to quaternary structure, homodimer. Interacts with RNF4. Interacts (via C-terminus) with TP53; this interaction inhibits TP53 ability to activate transcription. Widely expressed at high levels during embryogenesis, especially in the central nervous system, especially to the actively proliferating neuroblasts in the periventricular neocortical neuroepithelium, in the telencephalic cortical plate and in the hippocampus. Also expressed in a stage-specific manner in the mouse germinal epithelium. While strongly expressed during brain development,m its expression turns down in adult brain.

It localises to the nucleus. Functionally, transcriptional regulator that plays a role in many biological processes such as embryogenesis, senescence, T-cell development or neurogenesis. Interacts with the TP53 protein to control genes that are important in proliferation and in the DNA-damage response. Mechanistically, the interaction inhibits the DNA binding and transcriptional activity of TP53/p53. Part of the transcriptional network modulating regulatory T-cell development and controls the generation of the regulatory T-cell pool under homeostatic conditions. In Mus musculus (Mouse), this protein is POZ (BTB) and AT hook-containing zinc finger 1.